The primary structure comprises 233 residues: Ion-translocating oxidoreductase complex subunit E (233 aa).

The next 6 helical transmembrane spans lie at 18–38, 39–59, 69–89, 92–112, 128–148, and 182–202; these read ALVQ…ATNA, LGLG…VSAL, IPIY…LINA, FGLY…CIVI, ALDG…LGAL, and PFLL…LLAG.

The protein belongs to the NqrDE/RnfAE family. As to quaternary structure, the complex is composed of six subunits: RnfA, RnfB, RnfC, RnfD, RnfE and RnfG.

The protein resides in the cell inner membrane. In terms of biological role, part of a membrane-bound complex that couples electron transfer with translocation of ions across the membrane. In Yersinia pestis bv. Antiqua (strain Angola), this protein is Ion-translocating oxidoreductase complex subunit E.